A 96-amino-acid polypeptide reads, in one-letter code: Co-chaperonin GroES (96 aa).

It belongs to the GroES chaperonin family. As to quaternary structure, heptamer of 7 subunits arranged in a ring. Interacts with the chaperonin GroEL.

The protein localises to the cytoplasm. In terms of biological role, together with the chaperonin GroEL, plays an essential role in assisting protein folding. The GroEL-GroES system forms a nano-cage that allows encapsulation of the non-native substrate proteins and provides a physical environment optimized to promote and accelerate protein folding. GroES binds to the apical surface of the GroEL ring, thereby capping the opening of the GroEL channel. The polypeptide is Co-chaperonin GroES (Aggregatibacter actinomycetemcomitans (Actinobacillus actinomycetemcomitans)).